The primary structure comprises 121 residues: 18 kDa learning-associated protein of slug (121 aa).

Disordered regions lie at residues 44–67 (TMKT…GSME) and 95–121 (AVKK…AIKW). A compositionally biased stretch (polar residues) spans 45-64 (MKTTEPIQENKTSEGTSTDG).

It belongs to the learning-associated protein family. Expressed predominantly in cerebral ganglia (at protein level). The mRNA is highly expressed in cerebral ganglia, and is detected at lower levels in visceral-pedal ganglia, head, and body, but is not detected in the tail.

The protein localises to the cytoplasm. The protein resides in the secreted. In terms of biological role, may be involved in modulating long-term memory formation and retention, at least with respect to odor-taste associative learning. This chain is 18 kDa learning-associated protein of slug, found in Lehmannia marginata (Tree slug).